The sequence spans 178 residues: DNA-directed RNA polymerase subunit beta (178 aa).

The protein belongs to the RNA polymerase beta chain family. In terms of assembly, the RNAP catalytic core consists of 2 alpha, 1 beta, 1 beta' and 1 omega subunit. When a sigma factor is associated with the core the holoenzyme is formed, which can initiate transcription.

It carries out the reaction RNA(n) + a ribonucleoside 5'-triphosphate = RNA(n+1) + diphosphate. Its function is as follows. DNA-dependent RNA polymerase catalyzes the transcription of DNA into RNA using the four ribonucleoside triphosphates as substrates. The protein is DNA-directed RNA polymerase subunit beta (rpoB) of Liberibacter asiaticus (Citrus greening disease).